The sequence spans 201 residues: MSRYRGPRFKKIRRLGALPGLTRKTPKSGSNLKKKFHSGKKEQYRIRLQEKQKLRFHYGLTERQLLRYVHIAGKAKSSTGQVLLQLLEMRLDNILFRLGMASTIPEARQLVNHRHILVNGRIVDIPSFRCKPRDIITTKDNQRSKRLVQNSIASSDPGKLPKHLTIDTLQYKGLVKKILDRKWVGLKINELLVVEYYSRQT.

The tract at residues 20 to 39 (GLTRKTPKSGSNLKKKFHSG) is disordered. In terms of domain architecture, S4 RNA-binding spans 89-150 (MRLDNILFRL…NQRSKRLVQN (62 aa)).

The protein belongs to the universal ribosomal protein uS4 family. In terms of assembly, part of the 30S ribosomal subunit. Contacts protein S5. The interaction surface between S4 and S5 is involved in control of translational fidelity.

It is found in the plastid. It localises to the chloroplast. In terms of biological role, one of the primary rRNA binding proteins, it binds directly to 16S rRNA where it nucleates assembly of the body of the 30S subunit. Functionally, with S5 and S12 plays an important role in translational accuracy. In Oryza nivara (Indian wild rice), this protein is Small ribosomal subunit protein uS4c (rps4).